A 389-amino-acid polypeptide reads, in one-letter code: Multidrug resistance protein 1 (389 aa).

11 helical membrane passes run 6-26 (ITLTILLTNLFIAFLGIGLVI), 42-62 (AVGYMVACFAITQLIVSPIAG), 71-91 (KIMIVIGLLFFSVSEFLFGIG), 102-122 (MLGGISAAFIMPGVTAFIADI), 134-154 (YMSAAISTGFIIGPGIGGFLA), 160-180 (LPFFFAAAFALLAAILSILTL), 202-222 (IFAPMYFIAFLIILISSFGLA), 243-263 (IAIMITGGAIVGAITQVVLFD), 286-306 (VFLLTTVHSYVAILLVTVTVF), 336-356 (SMFTSIGNVFGPIIGGMLFDI), and 358-378 (VNYPFYFATVTLAIGIALTIA).

The protein belongs to the major facilitator superfamily. TCR/Tet family.

It localises to the cell membrane. In terms of biological role, energy-dependent efflux pump responsible for decreased drug accumulation in multi-drug-resistant cells. Probably uses a transmembrane proton gradient as the energy source. Causes the efflux of a variety of toxic substances, including such structurally diverse compounds as ethidium bromide, rhodamine and acridine dyes, tetraphenylphosphonium, puromycin, chloramphenicol, doxorubicin, and fluoroquinolone antibiotics. The polypeptide is Multidrug resistance protein 1 (bmr) (Bacillus subtilis (strain 168)).